The following is a 210-amino-acid chain: Thymidylate kinase (210 aa).

10–17 (GPEGAGKS) serves as a coordination point for ATP.

It belongs to the thymidylate kinase family.

The catalysed reaction is dTMP + ATP = dTDP + ADP. Its function is as follows. Phosphorylation of dTMP to form dTDP in both de novo and salvage pathways of dTTP synthesis. This is Thymidylate kinase from Pseudomonas syringae pv. syringae (strain B728a).